Here is a 211-residue protein sequence, read N- to C-terminus: uncharacterized protein (211 aa).

This is an uncharacterized protein from Mycoplasma pneumoniae (strain ATCC 29342 / M129 / Subtype 1) (Mycoplasmoides pneumoniae).